A 224-amino-acid polypeptide reads, in one-letter code: Protein GrpE (224 aa).

Residues 1 to 72 (MEKERDVAQE…KAKEEQNEEL (72 aa)) form a disordered region. A compositionally biased stretch (polar residues) spans 10 to 19 (EQATYEQESP). A compositionally biased stretch (basic and acidic residues) spans 20-67 (NAERQEELKENEHQEKNAPEEQEKVREENGRQDAQKDEIGDPEKAKEE).

Belongs to the GrpE family. Homodimer.

Its subcellular location is the cytoplasm. Functionally, participates actively in the response to hyperosmotic and heat shock by preventing the aggregation of stress-denatured proteins, in association with DnaK and GrpE. It is the nucleotide exchange factor for DnaK and may function as a thermosensor. Unfolded proteins bind initially to DnaJ; upon interaction with the DnaJ-bound protein, DnaK hydrolyzes its bound ATP, resulting in the formation of a stable complex. GrpE releases ADP from DnaK; ATP binding to DnaK triggers the release of the substrate protein, thus completing the reaction cycle. Several rounds of ATP-dependent interactions between DnaJ, DnaK and GrpE are required for fully efficient folding. The chain is Protein GrpE from Parageobacillus thermoglucosidasius (Geobacillus thermoglucosidasius).